Reading from the N-terminus, the 196-residue chain is ATP synthase subunit b 2 (196 aa).

The segment covering 1-18 (MVVAQAGAPAHPPAAHGA) has biased composition (low complexity). The interval 1–33 (MVVAQAGAPAHPPAAHGAEAGHGEAAGGEHGGF) is disordered. The helical transmembrane segment at 41-60 (FASQLIWLIVSFGALYFLMS) threads the bilayer.

This sequence belongs to the ATPase B chain family. F-type ATPases have 2 components, F(1) - the catalytic core - and F(0) - the membrane proton channel. F(1) has five subunits: alpha(3), beta(3), gamma(1), delta(1), epsilon(1). F(0) has three main subunits: a(1), b(2) and c(10-14). The alpha and beta chains form an alternating ring which encloses part of the gamma chain. F(1) is attached to F(0) by a central stalk formed by the gamma and epsilon chains, while a peripheral stalk is formed by the delta and b chains.

The protein localises to the cell inner membrane. In terms of biological role, f(1)F(0) ATP synthase produces ATP from ADP in the presence of a proton or sodium gradient. F-type ATPases consist of two structural domains, F(1) containing the extramembraneous catalytic core and F(0) containing the membrane proton channel, linked together by a central stalk and a peripheral stalk. During catalysis, ATP synthesis in the catalytic domain of F(1) is coupled via a rotary mechanism of the central stalk subunits to proton translocation. Component of the F(0) channel, it forms part of the peripheral stalk, linking F(1) to F(0). The b'-subunit is a diverged and duplicated form of b found in plants and photosynthetic bacteria. This is ATP synthase subunit b 2 (atpF2) from Azorhizobium caulinodans (strain ATCC 43989 / DSM 5975 / JCM 20966 / LMG 6465 / NBRC 14845 / NCIMB 13405 / ORS 571).